The sequence spans 707 residues: Acyl-CoA ligase 891, peroxisomal (707 aa).

259-270 contributes to the ATP binding site; that stretch reads INYTSGTTGPPK. The segment at 525 to 549 is fatty acid-binding; it reads DGWFRTGDVCTVDAQGRFIIIDRRK. A Peroxisome targeting signal motif is present at residues 705–707; it reads AKL.

The protein belongs to the ATP-dependent AMP-binding enzyme family.

It localises to the peroxisome matrix. It catalyses the reaction (4E,8E)-10-(4-hydroxy-6-methoxy-7-methyl-3-oxo-1,3-dihydro-2-benzofuran-5-yl)-4,8-dimethyldeca-4,8-dienoate + ATP + CoA = (4E,8E)-10-(4-hydroxy-6-methoxy-7-methyl-3-oxo-1,3-dihydro-2-benzofuran-5-yl)-4,8-dimethyldeca-4,8-dienoyl-CoA + AMP + diphosphate. It participates in secondary metabolite biosynthesis; terpenoid biosynthesis. In terms of biological role, acyl-CoA ligase involved in the biosynthesis of mycophenolic acid (MPA), the first isolated antibiotic natural product in the world obtained from a culture of Penicillium brevicompactum in 1893. The peroxisomal acyl-CoA ligase 891 converts the intermediate MFDHMP-3C into MFDHMP-3C-CoA which impairs its diffusion from the peroxisome. The first step of the pathway is the synthesis of 5-methylorsellinic acid (5MOA) by the cytosolic polyketide synthase mpaC. 5MOA is then converted to the phthalide compound 5,7-dihydroxy-4,6-dimethylphthalide (DHMP) by the endoplasmic reticulum-bound cytochrome P450 monooxygenase mpaDE. MpaDE first catalyzes hydroxylation of 5-MOA to 4,6-dihydroxy-2-(hydroxymethyl)-3-methylbenzoic acid (DHMB). MpaDE then acts as a lactone synthase that catalyzes the ring closure to convert DHMB into DHMP. The next step is the prenylation of DHMP by the Golgi apparatus-associated prenyltransferase mpaA to yield farnesyl-DHMP (FDHMP). The ER-bound oxygenase mpaB then mediates the oxidative cleavage the C19-C20 double bond in FDHMP to yield FDHMP-3C via a mycophenolic aldehyde intermediate. The O-methyltransferase mpaG catalyzes the methylation of FDHMP-3C to yield MFDHMP-3C. After the cytosolic methylation of FDHMP-3C, MFDHMP-3C enters into peroxisomes probably via free diffusion due to its low molecular weight. Upon a peroxisomal CoA ligation reaction, catalyzed by a beta-oxidation component enzyme acyl-CoA ligase ACL891, MFDHMP-3C-CoA would then be restricted to peroxisomes for the following beta-oxidation pathway steps. The peroxisomal beta-oxidation machinery than converts MFDHMP-3C-CoA into MPA_CoA, via a beta-oxidation chain-shortening process. Finally mpaH acts as a peroxisomal acyl-CoA hydrolase with high substrate specificity toward MPA-CoA to release the final product MPA. The chain is Acyl-CoA ligase 891, peroxisomal from Penicillium brevicompactum.